Consider the following 392-residue polypeptide: tRNA (guanine-N(7)-)-methyltransferase (392 aa).

S-adenosyl-L-methionine is bound by residues glutamate 123, glutamate 148, and aspartate 175. The substrate site is built by lysine 201 and aspartate 231.

It belongs to the class I-like SAM-binding methyltransferase superfamily. TrmB family.

The enzyme catalyses guanosine(46) in tRNA + S-adenosyl-L-methionine = N(7)-methylguanosine(46) in tRNA + S-adenosyl-L-homocysteine. It functions in the pathway tRNA modification; N(7)-methylguanine-tRNA biosynthesis. In terms of biological role, catalyzes the formation of N(7)-methylguanine at position 46 (m7G46) in tRNA. This chain is tRNA (guanine-N(7)-)-methyltransferase, found in Campylobacter jejuni subsp. jejuni serotype O:2 (strain ATCC 700819 / NCTC 11168).